The primary structure comprises 493 residues: Leucine-rich repeat-containing protein 14 (493 aa).

The stretch at 111-146 (KHTLRVLDMTGLLDDGVEQDPGTMSMWDCTAAVART) is one LRR 1; degenerate repeat. Residues 194–218 (RLCCRDLRAEDLPMRNTVALLQLLD) form an LRR 2; degenerate repeat. The stretch at 219-246 (AGCLRRVDLRFNNLGLRGLSVIIPHVAR) is one LRR 3; degenerate repeat. The stretch at 247-282 (FQHLASLRLHYVHGDSRQPSVDGEDNFRYFLAQMGR) is one LRR 4; degenerate repeat. 5 LRR repeats span residues 283–307 (FTCL…LSTL), 308–339 (QSPL…VHLK), 340–360 (KLDL…QGLL), 364–391 (AATL…VLTR), and 392–416 (CASL…LLRD).

Belongs to the PRAME family. LRRC14 subfamily. In terms of assembly, interacts with IKBKB; disrupts IKBKB-IKBKG interaction preventing I-kappa-B-kinase (IKK) core complex formation and leading to a decrease of IKBKB phosphorylation and NF-kappaB activation. Interacts with CHUK.

The protein resides in the cytoplasm. Functionally, negatively regulates Toll-like receptor-mediated NF-kappa-B signaling by disrupting IKK core complex formation through interaction with IKBKB. The sequence is that of Leucine-rich repeat-containing protein 14 from Bos taurus (Bovine).